A 435-amino-acid chain; its full sequence is Adenylosuccinate synthetase (435 aa).

GTP is bound by residues 17-23 (GDEGKGK) and 45-47 (GHT). The active-site Proton acceptor is aspartate 18. Residues aspartate 18 and glycine 45 each contribute to the Mg(2+) site. Residues 18-21 (DEGK), 43-46 (NAGH), threonine 134, arginine 148, glutamine 229, threonine 244, and arginine 308 contribute to the IMP site. Histidine 46 acts as the Proton donor in catalysis. 304–310 (SVTGRPR) is a substrate binding site. GTP is bound by residues arginine 310, 336-338 (KLD), and 418-420 (STG).

It belongs to the adenylosuccinate synthetase family. Homodimer. It depends on Mg(2+) as a cofactor.

Its subcellular location is the cytoplasm. It catalyses the reaction IMP + L-aspartate + GTP = N(6)-(1,2-dicarboxyethyl)-AMP + GDP + phosphate + 2 H(+). The protein operates within purine metabolism; AMP biosynthesis via de novo pathway; AMP from IMP: step 1/2. Plays an important role in the de novo pathway of purine nucleotide biosynthesis. Catalyzes the first committed step in the biosynthesis of AMP from IMP. This chain is Adenylosuccinate synthetase, found in Bordetella pertussis (strain Tohama I / ATCC BAA-589 / NCTC 13251).